The primary structure comprises 336 residues: UPF0284 protein Pcal_1534 (336 aa).

Belongs to the UPF0284 family.

This Pyrobaculum calidifontis (strain DSM 21063 / JCM 11548 / VA1) protein is UPF0284 protein Pcal_1534.